A 116-amino-acid chain; its full sequence is Flagellar hook-basal body complex protein FliE (116 aa).

It belongs to the FliE family.

The protein resides in the bacterial flagellum basal body. This chain is Flagellar hook-basal body complex protein FliE, found in Rhizobium rhizogenes (strain K84 / ATCC BAA-868) (Agrobacterium radiobacter).